Reading from the N-terminus, the 592-residue chain is ATP-binding protein Uup (592 aa).

ABC transporter domains lie at 1 to 221 (MPLI…RIEK) and 289 to 516 (FKLK…KSNI). ATP contacts are provided by residues 36–43 (GKNGAGKS) and 321–328 (GNNGSGKS). The stretch at 516–550 (ISFLKTKQNQVKKELKKVLNEIEKIENSIKTLKIQ) forms a coiled coil. Positions 518–592 (FLKTKQNQVK…IYWENLEKKL (75 aa)) are C-terminal domain (CTD), binds DNA.

This sequence belongs to the ABC transporter superfamily. ABCF family. Uup subfamily.

It localises to the cytoplasm. It catalyses the reaction ATP + H2O = ADP + phosphate + H(+). Probably plays a role in ribosome assembly or function. May be involved in resolution of branched DNA intermediates that result from template switching in postreplication gaps. Binds DNA and has ATPase activity. This chain is ATP-binding protein Uup, found in Buchnera aphidicola subsp. Schizaphis graminum (strain Sg).